A 494-amino-acid chain; its full sequence is UPF0371 protein SPT_0390 (494 aa).

This sequence belongs to the UPF0371 family.

The chain is UPF0371 protein SPT_0390 from Streptococcus pneumoniae (strain Taiwan19F-14).